Consider the following 627-residue polypeptide: DEAD-box ATP-dependent RNA helicase 35A (627 aa).

Composition is skewed to low complexity over residues 1–15 (MAAA…AAAA) and 52–61 (SSSAAEAASD). 2 disordered regions span residues 1 to 23 (MAAA…EDNY) and 40 to 85 (LRRL…LEAS). The span at 62-72 (LPPPPPPPPNQ) shows a compositional bias: pro residues. Positions 182–210 (RDFRDLRLPEPMLRKLREKGIVQPTPIQV) match the Q motif motif. Residues 213–397 (LPVVLSGRDM…KSALVKPVIV (185 aa)) form the Helicase ATP-binding domain. 226 to 233 (AFTGSGKT) lines the ATP pocket. The DEAD box signature appears at 345–348 (DEAD). The 161-residue stretch at 408–568 (DVIQEVEYVK…RIPPVLAELN (161 aa)) folds into the Helicase C-terminal domain. Residues 584–601 (KGCAYCGGLGHRVTDCPK) form a CCHC-type zinc finger.

The protein belongs to the DEAD box helicase family. DDX41 subfamily.

It carries out the reaction ATP + H2O = ADP + phosphate + H(+). This Oryza sativa subsp. japonica (Rice) protein is DEAD-box ATP-dependent RNA helicase 35A.